The sequence spans 244 residues: Pyridoxal phosphate homeostasis protein (244 aa).

The residue at position 37 (lysine 37) is an N6-(pyridoxal phosphate)lysine.

It belongs to the pyridoxal phosphate-binding protein YggS/PROSC family.

In terms of biological role, pyridoxal 5'-phosphate (PLP)-binding protein, which may be involved in intracellular homeostatic regulation of pyridoxal 5'-phosphate (PLP), the active form of vitamin B6. In Caenorhabditis elegans, this protein is Pyridoxal phosphate homeostasis protein.